A 115-amino-acid polypeptide reads, in one-letter code: Peptidyl-tRNA hydrolase (115 aa).

This sequence belongs to the PTH2 family.

The protein localises to the cytoplasm. The catalysed reaction is an N-acyl-L-alpha-aminoacyl-tRNA + H2O = an N-acyl-L-amino acid + a tRNA + H(+). The natural substrate for this enzyme may be peptidyl-tRNAs which drop off the ribosome during protein synthesis. This Methanosarcina acetivorans (strain ATCC 35395 / DSM 2834 / JCM 12185 / C2A) protein is Peptidyl-tRNA hydrolase.